The chain runs to 314 residues: D-alanine--D-alanine ligase (314 aa).

Positions 112–307 constitute an ATP-grasp domain; the sequence is KQVWQSLGLP…FQQLVLSILD (196 aa). Residue 138–193 participates in ATP binding; sequence AQMLGFPLIVKPAHEGSSIGMAKVGDVAELIAAWRAASAYDAQVLVEQWIQGPEFT. Residues Asp-261, Glu-274, and Asn-276 each contribute to the Mg(2+) site.

Belongs to the D-alanine--D-alanine ligase family. The cofactor is Mg(2+). Mn(2+) is required as a cofactor.

Its subcellular location is the cytoplasm. The enzyme catalyses 2 D-alanine + ATP = D-alanyl-D-alanine + ADP + phosphate + H(+). It functions in the pathway cell wall biogenesis; peptidoglycan biosynthesis. Its function is as follows. Cell wall formation. The protein is D-alanine--D-alanine ligase of Stutzerimonas stutzeri (strain A1501) (Pseudomonas stutzeri).